The sequence spans 1420 residues: Apolipoprotein(a) (1420 aa).

The segment covering 19 to 30 (TAVAPPNVTPVP) has biased composition (low complexity). A disordered region spans residues 19–46 (TAVAPPNVTPVPSLEAPSEQAPTEQRPG). 5 Kringle domains span residues 49-127 (ECYH…LTQC), 163-241 (ECYH…LTQC), 277-355 (ECYH…LTQC), 391-469 (ECYH…LTRC), and 505-583 (ECYY…LTQC). 15 disulfide bridges follow: C50-C127, C71-C110, C99-C122, C164-C241, C185-C224, C213-C236, C278-C355, C299-C338, C327-C350, C392-C469, C413-C452, C441-C464, C506-C583, C527-C566, and C555-C578. The tract at residues 598–617 (PDPSTQASSEEAPTEQSPEV) is disordered. Positions 600–616 (PSTQASSEEAPTEQSPE) are enriched in polar residues. Kringle domains are found at residues 619–697 (DCYH…LTQC), 725–803 (DCYH…LTQC), 839–917 (DCYQ…LTQC), 953–1031 (DCYH…LTQC), and 1067–1145 (QCYH…LTRC). 19 cysteine pairs are disulfide-bonded: C620–C697, C641–C680, C669–C692, C726–C803, C747–C786, C775–C798, C840–C917, C861–C900, C889–C912, C954–C1031, C975–C1014, C1003–C1026, C1068–C1145, C1089–C1128, C1117–C1140, C1217–C1233, C1309–C1376, C1339–C1355, and C1366–C1394. The 228-residue stretch at 1191-1418 (IVGGCVAHPH…FVTWIEGVMR (228 aa)) folds into the Peptidase S1 domain.

This sequence belongs to the peptidase S1 family. Plasminogen subfamily. As to quaternary structure, disulfide-linked to apo-B100. Binds to fibronectin and decorin. In terms of processing, N- and O-glycosylated.

Apo(a) is the main constituent of lipoprotein(a) (Lp(a)). It has serine proteinase activity and is able of autoproteolysis. Inhibits tissue-type plasminogen activator 1. Lp(a) may be a ligand for megalin/Gp 330. In Macaca mulatta (Rhesus macaque), this protein is Apolipoprotein(a) (LPA).